The primary structure comprises 389 residues: Chalcone synthase 8 (389 aa).

Residue Cys-164 is part of the active site.

It belongs to the thiolase-like superfamily. Chalcone/stilbene synthases family.

The catalysed reaction is (E)-4-coumaroyl-CoA + 3 malonyl-CoA + 3 H(+) = 2',4,4',6'-tetrahydroxychalcone + 3 CO2 + 4 CoA. It functions in the pathway secondary metabolite biosynthesis; flavonoid biosynthesis. The primary product of this enzyme is 4,2',4',6'-tetrahydroxychalcone (also termed naringenin-chalcone or chalcone) which can under specific conditions spontaneously isomerize into naringenin. The chain is Chalcone synthase 8 (CHS8) from Medicago sativa (Alfalfa).